A 473-amino-acid chain; its full sequence is 3-isopropylmalate dehydratase large subunit (473 aa).

[4Fe-4S] cluster-binding residues include Cys-351, Cys-414, and Cys-417.

It belongs to the aconitase/IPM isomerase family. LeuC type 1 subfamily. Heterodimer of LeuC and LeuD. [4Fe-4S] cluster is required as a cofactor.

It catalyses the reaction (2R,3S)-3-isopropylmalate = (2S)-2-isopropylmalate. It functions in the pathway amino-acid biosynthesis; L-leucine biosynthesis; L-leucine from 3-methyl-2-oxobutanoate: step 2/4. Its function is as follows. Catalyzes the isomerization between 2-isopropylmalate and 3-isopropylmalate, via the formation of 2-isopropylmaleate. The sequence is that of 3-isopropylmalate dehydratase large subunit from Variovorax paradoxus (strain S110).